The sequence spans 228 residues: ATP-dependent dethiobiotin synthetase BioD (228 aa).

13–18 (DIGKTF) lines the ATP pocket. Residue Thr17 coordinates Mg(2+). The active site involves Lys38. Residue Ser42 participates in substrate binding. ATP-binding positions include Asp55, 116–119 (EGSG), 179–180 (NK), and 208–210 (PKI). Mg(2+) contacts are provided by Asp55 and Glu116.

This sequence belongs to the dethiobiotin synthetase family. As to quaternary structure, homodimer. Mg(2+) is required as a cofactor.

Its subcellular location is the cytoplasm. The enzyme catalyses (7R,8S)-7,8-diammoniononanoate + CO2 + ATP = (4R,5S)-dethiobiotin + ADP + phosphate + 3 H(+). The protein operates within cofactor biosynthesis; biotin biosynthesis; biotin from 7,8-diaminononanoate: step 1/2. Functionally, catalyzes a mechanistically unusual reaction, the ATP-dependent insertion of CO2 between the N7 and N8 nitrogen atoms of 7,8-diaminopelargonic acid (DAPA, also called 7,8-diammoniononanoate) to form a ureido ring. This chain is ATP-dependent dethiobiotin synthetase BioD, found in Clostridium perfringens (strain 13 / Type A).